Reading from the N-terminus, the 382-residue chain is Sulfate adenylyltransferase (382 aa).

The protein belongs to the sulfate adenylyltransferase family.

It carries out the reaction sulfate + ATP + H(+) = adenosine 5'-phosphosulfate + diphosphate. It functions in the pathway sulfur metabolism; hydrogen sulfide biosynthesis; sulfite from sulfate: step 1/3. The polypeptide is Sulfate adenylyltransferase (Staphylothermus marinus (strain ATCC 43588 / DSM 3639 / JCM 9404 / F1)).